Here is a 775-residue protein sequence, read N- to C-terminus: Ribonucleoside-diphosphate reductase large subunit (775 aa).

Substrate contacts are provided by residues T200, 215 to 216 (SC), G246, 427 to 431 (NLCTE), and 606 to 610 (PTVSS). C216 and C444 are oxidised to a cystine. N427 serves as the catalytic Proton acceptor. C429 acts as the Cysteine radical intermediate in catalysis. The active-site Proton acceptor is E431.

The protein belongs to the ribonucleoside diphosphate reductase large chain family. Heterotetramer composed of a homodimer of the large subunit (R1) and a homodimer of the small subunit (R2). Larger multisubunit protein complex are also active, composed of (R1)n(R2)n.

It catalyses the reaction a 2'-deoxyribonucleoside 5'-diphosphate + [thioredoxin]-disulfide + H2O = a ribonucleoside 5'-diphosphate + [thioredoxin]-dithiol. Ribonucleoside-diphosphate reductase holoenzyme provides the precursors necessary for viral DNA synthesis. Allows virus growth in non-dividing cells, as well as reactivation from latency in infected hosts. Catalyzes the biosynthesis of deoxyribonucleotides from the corresponding ribonucleotides. In Homo sapiens (Human), this protein is Ribonucleoside-diphosphate reductase large subunit.